The sequence spans 1424 residues: S-layer protein A (1424 aa).

Positions 1–24 are cleaved as a signal peptide; sequence MNKLVGLLVSSLFLASILIGIAPA. N60, N70, N276, N295, N342, N358, N377, N468, N517, N545, N559, N581, N633, N714, N875, N914, N955, N989, N1018, N1042, N1093, N1134, N1197, N1217, N1252, N1276, N1304, and N1419 each carry an N-linked (GlcNAc...) asparagine glycan.

The protein belongs to the Sulfolobales SlaA family. As to quaternary structure, the mushroom-shaped unit cells of the Sulfolobales' S-layers may consist of three SlaB subunits and six SlaA subunits. Glycosylated. C-terminal glycosylation sites are modified with a heterogeneous family of glycans, with the largest having a composition Glc(1)Man(2)GlcNAc(2) plus 6-sulfoquinovose (QuiS).

The protein resides in the secreted. The protein localises to the cell wall. It localises to the S-layer. Functionally, S-layer large protein. May form the highly ordered outer sheath. The protein is S-layer protein A of Sulfolobus acidocaldarius (strain ATCC 33909 / DSM 639 / JCM 8929 / NBRC 15157 / NCIMB 11770).